The chain runs to 368 residues: Putative F-box/kelch-repeat protein At5g02995 (368 aa).

The F-box domain occupies 35–84 (SLYWNDPTEDCVWNCLARISRFHYPTLSLVSKGFRSLIASPELEATRSFI). 2 Kelch repeats span residues 140-186 (DIYI…IVDK) and 187-233 (KIYV…VSGG).

The sequence is that of Putative F-box/kelch-repeat protein At5g02995 from Arabidopsis thaliana (Mouse-ear cress).